The chain runs to 725 residues: Catalase-peroxidase (725 aa).

A cross-link (tryptophyl-tyrosyl-methioninium (Trp-Tyr) (with M-252)) is located at residues 98-226 (WHMAGSYRTS…LAAVQMGLIY (129 aa)). The active-site Proton acceptor is H99. Positions 226 to 252 (YVNPEGVNGKSDPQATAYQMRETFARM) form a cross-link, tryptophyl-tyrosyl-methioninium (Tyr-Met) (with W-98). A heme b-binding site is contributed by H267.

The protein belongs to the peroxidase family. Peroxidase/catalase subfamily. Homodimer or homotetramer. It depends on heme b as a cofactor. Post-translationally, formation of the three residue Trp-Tyr-Met cross-link is important for the catalase, but not the peroxidase activity of the enzyme.

The catalysed reaction is H2O2 + AH2 = A + 2 H2O. The enzyme catalyses 2 H2O2 = O2 + 2 H2O. Bifunctional enzyme with both catalase and broad-spectrum peroxidase activity. In Paracoccus denitrificans (strain Pd 1222), this protein is Catalase-peroxidase.